A 167-amino-acid chain; its full sequence is Zymogen granule membrane protein 16 (167 aa).

Positions 1–16 are cleaved as a signal peptide; that stretch reads MLTVALLALLCASASG. One can recognise a Jacalin-type lectin domain in the interval 24–159; sequence SSYSGEYGGG…IDAIGLHWDV (136 aa).

Belongs to the jacalin lectin family. As to expression, highly expressed in liver. Detected at lower levels in colon, ileum and jejunum.

The protein resides in the secreted. Its subcellular location is the extracellular space. The protein localises to the extracellular matrix. It localises to the zymogen granule lumen. It is found in the golgi apparatus lumen. In terms of biological role, may play a role in protein trafficking. May act as a linker molecule between the submembranous matrix on the luminal side of zymogen granule membrane (ZGM) and aggregated secretory proteins during granule formation in the TGN. The polypeptide is Zymogen granule membrane protein 16 (ZG16) (Homo sapiens (Human)).